The chain runs to 446 residues: MEKYLSVTTLTKYLKMKFDKDPYLERVYLTGQVSNFRKRPTHQYFSLKDDHAVIQATIWSGIYQKLGFDLEEGMKINVIGRVQVYEPSGSYSIIIEKVEPDGVGALAIQFEQLKKKLTEEGLFQERFKQALPQFSKRIGVVTSRSGAVIRDIITTVSRRFPGVDILLYPTKVQGEGAAEEIARNIARANQRDDLDLLIIGRGGGSIEDLWAFNEEIVVRAIFESRLPVISSVGHETDVTLADFVADRRAATPTAAAELATPVTKLDVLAHLQNQEKRMVTAVRNVLSKKQEALKKCSQSVIFRQPERLYDGYLQRLDQLQLRLKQSLRTRISDNKQLVQARTHQLVQLSPVTKIQRYQDRLGQLDKLLGSQMALVYDAKVAEAKRLSEALLMLDTSRIVARGYAIVKKEESVVDSVESLKKKDQVTLLMRDGQVELEVKDVKTKEI.

It belongs to the XseA family. Heterooligomer composed of large and small subunits.

It is found in the cytoplasm. It carries out the reaction Exonucleolytic cleavage in either 5'- to 3'- or 3'- to 5'-direction to yield nucleoside 5'-phosphates.. Bidirectionally degrades single-stranded DNA into large acid-insoluble oligonucleotides, which are then degraded further into small acid-soluble oligonucleotides. This Streptococcus pneumoniae (strain ATCC BAA-255 / R6) protein is Exodeoxyribonuclease 7 large subunit.